A 338-amino-acid chain; its full sequence is Lipoate-protein ligase A (338 aa).

Positions 29-216 constitute a BPL/LPL catalytic domain; that stretch reads PATQRVLFLW…AFFAHYGERV (188 aa). ATP contacts are provided by residues arginine 71, 76–79, and lysine 134; that span reads GAVF. Position 134 (lysine 134) interacts with (R)-lipoate.

It belongs to the LplA family. As to quaternary structure, monomer.

Its subcellular location is the cytoplasm. The enzyme catalyses L-lysyl-[lipoyl-carrier protein] + (R)-lipoate + ATP = N(6)-[(R)-lipoyl]-L-lysyl-[lipoyl-carrier protein] + AMP + diphosphate + H(+). It functions in the pathway protein modification; protein lipoylation via exogenous pathway; protein N(6)-(lipoyl)lysine from lipoate: step 1/2. The protein operates within protein modification; protein lipoylation via exogenous pathway; protein N(6)-(lipoyl)lysine from lipoate: step 2/2. Functionally, catalyzes both the ATP-dependent activation of exogenously supplied lipoate to lipoyl-AMP and the transfer of the activated lipoyl onto the lipoyl domains of lipoate-dependent enzymes. This Escherichia coli O157:H7 protein is Lipoate-protein ligase A.